The primary structure comprises 265 residues: Adenosylcobinamide-GDP ribazoletransferase (265 aa).

A run of 7 helical transmembrane segments spans residues 40-60, 67-87, 121-141, 150-170, 191-211, 213-233, and 243-263; these read IAYAIPLAGAVIGLIGAVVLV, LPAFLASVLAVTALVLTTGAF, GGCALILALLLRVAALEALVA, LALVVAEAASRAAGVLLLLAL, LACALVAALLVVVILVPGFGI, TAFAGLIAPLVALFAMMRLSG, and VAGATQQVAVIVFLLGVLIFP.

The protein belongs to the CobS family. The cofactor is Mg(2+).

Its subcellular location is the cell inner membrane. It catalyses the reaction alpha-ribazole + adenosylcob(III)inamide-GDP = adenosylcob(III)alamin + GMP + H(+). The catalysed reaction is alpha-ribazole 5'-phosphate + adenosylcob(III)inamide-GDP = adenosylcob(III)alamin 5'-phosphate + GMP + H(+). The protein operates within cofactor biosynthesis; adenosylcobalamin biosynthesis; adenosylcobalamin from cob(II)yrinate a,c-diamide: step 7/7. Joins adenosylcobinamide-GDP and alpha-ribazole to generate adenosylcobalamin (Ado-cobalamin). Also synthesizes adenosylcobalamin 5'-phosphate from adenosylcobinamide-GDP and alpha-ribazole 5'-phosphate. This is Adenosylcobinamide-GDP ribazoletransferase from Xanthobacter autotrophicus (strain ATCC BAA-1158 / Py2).